We begin with the raw amino-acid sequence, 525 residues long: BTB/POZ domain-containing protein At1g50280 (525 aa).

The 75-residue stretch at 5–79 (NDLKINLNGQ…CYHNGEILID (75 aa)) folds into the BTB domain. The region spanning 200-466 (EWWFEDMTNL…IEALKSRCGN (267 aa)) is the NPH3 domain.

It belongs to the NPH3 family.

It functions in the pathway protein modification; protein ubiquitination. In terms of biological role, may act as a substrate-specific adapter of an E3 ubiquitin-protein ligase complex (CUL3-RBX1-BTB) which mediates the ubiquitination and subsequent proteasomal degradation of target proteins. The protein is BTB/POZ domain-containing protein At1g50280 of Arabidopsis thaliana (Mouse-ear cress).